A 254-amino-acid chain; its full sequence is Segregation and condensation protein A (254 aa).

The protein belongs to the ScpA family. In terms of assembly, component of a cohesin-like complex composed of ScpA, ScpB and the Smc homodimer, in which ScpA and ScpB bind to the head domain of Smc. The presence of the three proteins is required for the association of the complex with DNA.

The protein resides in the cytoplasm. Functionally, participates in chromosomal partition during cell division. May act via the formation of a condensin-like complex containing Smc and ScpB that pull DNA away from mid-cell into both cell halves. The polypeptide is Segregation and condensation protein A (Brevibacillus brevis (strain 47 / JCM 6285 / NBRC 100599)).